Here is a 261-residue protein sequence, read N- to C-terminus: Kallikrein 1-related peptidase b9 (261 aa).

The first 18 residues, 1 to 18 (MRFLILFLALSLGGIDAA), serve as a signal peptide directing secretion. The propeptide at 19-24 (PPVHSR) is activation peptide. Residues 25–258 (IVGGFKCEKN…FTSWIKDTMA (234 aa)) form the Peptidase S1 domain. Intrachain disulfides connect C31–C173, C50–C66, C152–C219, C184–C198, and C209–C234. H65 functions as the Charge relay system in the catalytic mechanism. N-linked (GlcNAc...) asparagine glycosylation occurs at N102. D120 serves as the catalytic Charge relay system. The active-site Charge relay system is the S213.

It belongs to the peptidase S1 family. Kallikrein subfamily.

The catalysed reaction is Preferential cleavage of Arg-|-Xaa bonds in small molecule substrates. Highly selective action to release kallidin (lysyl-bradykinin) from kininogen involves hydrolysis of Met-|-Xaa or Leu-|-Xaa.. Its function is as follows. Glandular kallikreins cleave Met-Lys and Arg-Ser bonds in kininogen to release Lys-bradykinin. The polypeptide is Kallikrein 1-related peptidase b9 (Klk1b9) (Mus musculus (Mouse)).